The chain runs to 151 residues: High mobility group B protein 14 (151 aa).

Disordered stretches follow at residues 1-62 and 132-151; these read MTKR…QTKM and TKRMESGAHDESETDSDYSE. Low complexity predominate over residues 7-20; that stretch reads KSGPLSPSCSGGSS. The span at 35-56 shows a compositional bias: basic residues; it reads RSTRLRLQPLRKPKTSPKKKPV. Positions 63-132 form a DNA-binding region, HMG box; that stretch reads PKKPATAFFF…EFHRAMTEYT (70 aa). Residues 132-142 show a composition bias toward basic and acidic residues; the sequence is TKRMESGAHDE. Position 150 is a phosphoserine (serine 150).

It belongs to the HMGB family.

It localises to the nucleus. This is High mobility group B protein 14 (HMGB14) from Arabidopsis thaliana (Mouse-ear cress).